Consider the following 290-residue polypeptide: Ribonuclease 3 (290 aa).

One can recognise an RNase III domain in the interval 20 to 145; it reads YSCFYRILGF…FIGAIYLDRG (126 aa). Mg(2+) is bound at residue glutamate 62. Residue aspartate 66 is part of the active site. Asparagine 131 and glutamate 134 together coordinate Mg(2+). Glutamate 134 is an active-site residue. The region spanning 173–242 is the DRBM domain; it reads NFKSKLIEWS…AQMTLKKIKG (70 aa). Residues 254 to 290 are disordered; the sequence is KTQNNVPAEDTTPESEMSLTAENQQIDEIISTEEISV. The span at 267–279 shows a compositional bias: polar residues; sequence ESEMSLTAENQQI.

The protein belongs to the ribonuclease III family. Homodimer. Requires Mg(2+) as cofactor.

Its subcellular location is the cytoplasm. The enzyme catalyses Endonucleolytic cleavage to 5'-phosphomonoester.. Its function is as follows. Digests double-stranded RNA. Involved in the processing of primary rRNA transcript to yield the immediate precursors to the large and small rRNAs (23S and 16S). Processes some mRNAs, and tRNAs when they are encoded in the rRNA operon. Processes pre-crRNA and tracrRNA of type II CRISPR loci if present in the organism. In Bacteroides fragilis (strain YCH46), this protein is Ribonuclease 3.